We begin with the raw amino-acid sequence, 236 residues long: Probable chemoreceptor glutamine deamidase CheD (236 aa).

The tract at residues 1–20 (MIEFGKRATPQSAADAVRGD) is disordered.

This sequence belongs to the CheD family.

It carries out the reaction L-glutaminyl-[protein] + H2O = L-glutamyl-[protein] + NH4(+). Probably deamidates glutamine residues to glutamate on methyl-accepting chemotaxis receptors (MCPs), playing an important role in chemotaxis. The chain is Probable chemoreceptor glutamine deamidase CheD from Ralstonia pickettii (strain 12J).